A 297-amino-acid chain; its full sequence is Phenylalanine-4-hydroxylase (297 aa).

3 residues coordinate Fe cation: H138, H143, and E184.

This sequence belongs to the biopterin-dependent aromatic amino acid hydroxylase family. Monomer. The cofactor is Fe(2+).

The catalysed reaction is (6R)-L-erythro-5,6,7,8-tetrahydrobiopterin + L-phenylalanine + O2 = (4aS,6R)-4a-hydroxy-L-erythro-5,6,7,8-tetrahydrobiopterin + L-tyrosine. Its pathway is amino-acid degradation; L-phenylalanine degradation; acetoacetate and fumarate from L-phenylalanine: step 1/6. This is Phenylalanine-4-hydroxylase (phhA) from Chromobacterium violaceum (strain ATCC 12472 / DSM 30191 / JCM 1249 / CCUG 213 / NBRC 12614 / NCIMB 9131 / NCTC 9757 / MK).